The primary structure comprises 129 residues: Small ribosomal subunit protein uS11 (129 aa).

It belongs to the universal ribosomal protein uS11 family. In terms of assembly, part of the 30S ribosomal subunit. Interacts with proteins S7 and S18. Binds to IF-3.

Its function is as follows. Located on the platform of the 30S subunit, it bridges several disparate RNA helices of the 16S rRNA. Forms part of the Shine-Dalgarno cleft in the 70S ribosome. The polypeptide is Small ribosomal subunit protein uS11 (Desulfitobacterium hafniense (strain DSM 10664 / DCB-2)).